Here is a 246-residue protein sequence, read N- to C-terminus: MKSTFLFALFVLFLAASEAATDYPTNPPTTPPTPAPTSTPLPSSAASPELVAQLLNAPSELDRIKLLKDNQFVFDFKNSKLGVTQGTGGKTVATSRTNFPAVIGHNVAMTVGFIEACGINLPHTHPRATEINFIASGKFEAGFFLENQAKFIGHTLEAGMATVFPQGAIHFEINMNCEPAMFVAAFNNEDPGVQTTASSFFGLPADVVGVSLNISSIQTVEDLGKHLPQNPAVAMQACMKRCGFSD.

The signal sequence occupies residues Met1–Ala19. The disordered stretch occupies residues Tyr23–Ala45. The segment covering Thr25–Thr39 has biased composition (pro residues). A Cupin type-1 domain is found at Phe74–Val220. Mn(2+)-binding residues include His123, His125, Glu130, and His170. A glycan (N-linked (GlcNAc...) asparagine) is linked at Asn213.

It belongs to the germin family.

It localises to the secreted. Its subcellular location is the cell wall. The sequence is that of Spherulin-1A from Physarum polycephalum (Slime mold).